The primary structure comprises 53 residues: Large ribosomal subunit protein bL32c (53 aa).

It belongs to the bacterial ribosomal protein bL32 family.

The protein localises to the plastid. It localises to the chloroplast. This Glycine max (Soybean) protein is Large ribosomal subunit protein bL32c.